The following is a 363-amino-acid chain: Putative lipoate-protein ligase A (363 aa).

Positions 49–229 (STAKHCLLLY…CFLLHKSHST (181 aa)) constitute a BPL/LPL catalytic domain. Residues Arg-91, 96 to 99 (GTVF), and Lys-152 each bind ATP. Residue Lys-152 coordinates (R)-lipoate.

This sequence belongs to the LplA family. In terms of assembly, monomer.

The protein localises to the cytoplasm. The enzyme catalyses L-lysyl-[lipoyl-carrier protein] + (R)-lipoate + ATP = N(6)-[(R)-lipoyl]-L-lysyl-[lipoyl-carrier protein] + AMP + diphosphate + H(+). It participates in protein modification; protein lipoylation via exogenous pathway; protein N(6)-(lipoyl)lysine from lipoate: step 1/2. The protein operates within protein modification; protein lipoylation via exogenous pathway; protein N(6)-(lipoyl)lysine from lipoate: step 2/2. Functionally, catalyzes both the ATP-dependent activation of exogenously supplied lipoate to lipoyl-AMP and the transfer of the activated lipoyl onto the lipoyl domains of lipoate-dependent enzymes. The protein is Putative lipoate-protein ligase A (aim22) of Schizosaccharomyces pombe (strain 972 / ATCC 24843) (Fission yeast).